The following is a 637-amino-acid chain: Chaperone protein HtpG (637 aa).

The interval methionine 1–arginine 345 is a; substrate-binding. The tract at residues glutamate 346–lysine 562 is b. Residues leucine 563–lysine 637 are c.

This sequence belongs to the heat shock protein 90 family. Homodimer.

It localises to the cytoplasm. Molecular chaperone. Has ATPase activity. This chain is Chaperone protein HtpG, found in Shewanella sp. (strain W3-18-1).